The sequence spans 451 residues: MARKHFGTDGIRGRANAAITPELAMKVAQATGVLFQRGEQRHRAVIGKDTRLSGYMIEYAMVAGFTSVGMDVLLLGPMPTPAVAMLTPSMRADVGVMISASHNPYEDNGIKLFGPDGFKLSDEMEAEIEAKLDRDVALKLSKPADLGRAKRVEGAQARYIEFTKRTLTRSLSLEGLRIVIDCANGAGYKVAPEALWELGAEVFAIGTEPDGFNINRDVGSTAPAALVKKVHEVRADIGIALDGDADRVIIVDENGKVIDGDQLMAAIAAGWQEEGRLARPGIVATLMSNLGLERYLESIGLTLARTAVGDRHVLEHMRAHGYNLGGEQSGHIILSDYCTTGDGLVAALQVLALVKRLGKPVSQVCRRFDPVPQILKNVRVNAAQSLEQDHVKRVIEEGHRKLGKNGRLVIRPSGTEPVVRVMGEGDNRDLVETIVDDICEALNAATPLAAE.

The active-site Phosphoserine intermediate is the Ser101. Residues Ser101, Asp242, Asp244, and Asp246 each coordinate Mg(2+). Ser101 carries the post-translational modification Phosphoserine.

It belongs to the phosphohexose mutase family. Mg(2+) is required as a cofactor. Activated by phosphorylation.

It catalyses the reaction alpha-D-glucosamine 1-phosphate = D-glucosamine 6-phosphate. Functionally, catalyzes the conversion of glucosamine-6-phosphate to glucosamine-1-phosphate. The chain is Phosphoglucosamine mutase from Beijerinckia indica subsp. indica (strain ATCC 9039 / DSM 1715 / NCIMB 8712).